Reading from the N-terminus, the 261-residue chain is Cytochrome c oxidase subunit 3 (261 aa).

Topologically, residues Met1–Pro15 are mitochondrial matrix. Residues Trp16–Trp34 form a helical membrane-spanning segment. The Mitochondrial intermembrane segment spans residues Phe35–Thr40. Residues Met41 to Thr66 form a helical membrane-spanning segment. Residues Tyr67–Thr72 lie on the Mitochondrial matrix side of the membrane. A helical transmembrane segment spans residues Ser73–Ser105. Over Leu106–Glu128 the chain is Mitochondrial intermembrane. The helical transmembrane segment at Val129–Met152 threads the bilayer. Topologically, residues Lys153–Asn155 are mitochondrial matrix. A helical transmembrane segment spans residues Lys156–Glu183. Residues Thr184 to Asp190 lie on the Mitochondrial intermembrane side of the membrane. The chain crosses the membrane as a helical span at residues Ser191–Ala223. Residues Lys224–His232 lie on the Mitochondrial matrix side of the membrane. Residues Phe233–Val256 traverse the membrane as a helical segment. Residues Tyr257–Ser261 are Mitochondrial intermembrane-facing.

The protein belongs to the cytochrome c oxidase subunit 3 family. As to quaternary structure, component of the cytochrome c oxidase (complex IV, CIV), a multisubunit enzyme composed of 14 subunits. The complex is composed of a catalytic core of 3 subunits MT-CO1, MT-CO2 and MT-CO3, encoded in the mitochondrial DNA, and 11 supernumerary subunits COX4I, COX5A, COX5B, COX6A, COX6B, COX6C, COX7A, COX7B, COX7C, COX8 and NDUFA4, which are encoded in the nuclear genome. The complex exists as a monomer or a dimer and forms supercomplexes (SCs) in the inner mitochondrial membrane with NADH-ubiquinone oxidoreductase (complex I, CI) and ubiquinol-cytochrome c oxidoreductase (cytochrome b-c1 complex, complex III, CIII), resulting in different assemblies (supercomplex SCI(1)III(2)IV(1) and megacomplex MCI(2)III(2)IV(2)).

It localises to the mitochondrion inner membrane. The catalysed reaction is 4 Fe(II)-[cytochrome c] + O2 + 8 H(+)(in) = 4 Fe(III)-[cytochrome c] + 2 H2O + 4 H(+)(out). In terms of biological role, component of the cytochrome c oxidase, the last enzyme in the mitochondrial electron transport chain which drives oxidative phosphorylation. The respiratory chain contains 3 multisubunit complexes succinate dehydrogenase (complex II, CII), ubiquinol-cytochrome c oxidoreductase (cytochrome b-c1 complex, complex III, CIII) and cytochrome c oxidase (complex IV, CIV), that cooperate to transfer electrons derived from NADH and succinate to molecular oxygen, creating an electrochemical gradient over the inner membrane that drives transmembrane transport and the ATP synthase. Cytochrome c oxidase is the component of the respiratory chain that catalyzes the reduction of oxygen to water. Electrons originating from reduced cytochrome c in the intermembrane space (IMS) are transferred via the dinuclear copper A center (CU(A)) of subunit 2 and heme A of subunit 1 to the active site in subunit 1, a binuclear center (BNC) formed by heme A3 and copper B (CU(B)). The BNC reduces molecular oxygen to 2 water molecules using 4 electrons from cytochrome c in the IMS and 4 protons from the mitochondrial matrix. In Lycodon semicarinatus (Ryukyu odd-tooth snake), this protein is Cytochrome c oxidase subunit 3 (MT-CO3).